Consider the following 366-residue polypeptide: A-type ATP synthase subunit C (366 aa).

This sequence belongs to the V-ATPase V0D/AC39 subunit family. Has multiple subunits with at least A(3), B(3), C, D, E, F, H, I and proteolipid K(x).

The protein resides in the cell membrane. In terms of biological role, component of the A-type ATP synthase that produces ATP from ADP in the presence of a proton gradient across the membrane. In Thermococcus onnurineus (strain NA1), this protein is A-type ATP synthase subunit C.